The following is a 123-amino-acid chain: Large ribosomal subunit protein bL12 (123 aa).

This sequence belongs to the bacterial ribosomal protein bL12 family. As to quaternary structure, homodimer. Part of the ribosomal stalk of the 50S ribosomal subunit. Forms a multimeric L10(L12)X complex, where L10 forms an elongated spine to which 2 to 4 L12 dimers bind in a sequential fashion. Binds GTP-bound translation factors.

In terms of biological role, forms part of the ribosomal stalk which helps the ribosome interact with GTP-bound translation factors. Is thus essential for accurate translation. This is Large ribosomal subunit protein bL12 from Roseobacter denitrificans (strain ATCC 33942 / OCh 114) (Erythrobacter sp. (strain OCh 114)).